The primary structure comprises 381 residues: uncharacterized protein (381 aa).

A run of 11 helical transmembrane segments spans residues 10-29 (IFFS…INFY), 75-93 (IILI…LIIL), 98-117 (LIKI…FTSR), 130-147 (YLFL…NLMV), 157-179 (TNNT…FLHY), 199-221 (IELQ…WYYE), 236-255 (LILK…ICYI), 262-284 (YFAN…IHGT), 289-311 (NILY…ILIL), 323-340 (ALLS…AGAL), and 355-374 (LFSV…WYFI).

Its subcellular location is the cell membrane. This is an uncharacterized protein from Rickettsia prowazekii (strain Madrid E).